The sequence spans 107 residues: Nucleoid-associated protein A1I_00660 (107 aa).

The disordered stretch occupies residues 81-107; sequence KCDSDSQNSMSGALSGMSLPPGFKMPF.

It belongs to the YbaB/EbfC family. As to quaternary structure, homodimer.

It is found in the cytoplasm. The protein resides in the nucleoid. Its function is as follows. Binds to DNA and alters its conformation. May be involved in regulation of gene expression, nucleoid organization and DNA protection. This Rickettsia bellii (strain OSU 85-389) protein is Nucleoid-associated protein A1I_00660.